The following is a 593-amino-acid chain: A-type ATP synthase subunit A (593 aa).

Residue 236-243 (GPFGSGKT) participates in ATP binding.

It belongs to the ATPase alpha/beta chains family. As to quaternary structure, has multiple subunits with at least A(3), B(3), C, D, E, F, H, I and proteolipid K(x).

It is found in the cell membrane. The catalysed reaction is ATP + H2O + 4 H(+)(in) = ADP + phosphate + 5 H(+)(out). Its function is as follows. Component of the A-type ATP synthase that produces ATP from ADP in the presence of a proton gradient across the membrane. The A chain is the catalytic subunit. This Pyrobaculum arsenaticum (strain DSM 13514 / JCM 11321 / PZ6) protein is A-type ATP synthase subunit A.